A 91-amino-acid chain; its full sequence is DNA-directed RNA polymerase subunit omega (91 aa).

This sequence belongs to the RNA polymerase subunit omega family. As to quaternary structure, the RNAP catalytic core consists of 2 alpha, 1 beta, 1 beta' and 1 omega subunit. When a sigma factor is associated with the core the holoenzyme is formed, which can initiate transcription.

The enzyme catalyses RNA(n) + a ribonucleoside 5'-triphosphate = RNA(n+1) + diphosphate. Functionally, promotes RNA polymerase assembly. Latches the N- and C-terminal regions of the beta' subunit thereby facilitating its interaction with the beta and alpha subunits. The polypeptide is DNA-directed RNA polymerase subunit omega (Pectobacterium carotovorum subsp. carotovorum (strain PC1)).